Consider the following 598-residue polypeptide: Beta-myrcene/(E)-beta-ocimene synthase 2, chloroplastic (598 aa).

Residues 1–30 (MATLCIGSAPIYQNACIHNFRLQRPRRFIS) constitute a chloroplast transit peptide. Positions 307, 344, 348, 486, and 489 each coordinate (2E)-geranyl diphosphate. Mg(2+) contacts are provided by aspartate 344 and aspartate 348. The short motif at 344-348 (DDIYD) is the DDXXD motif element. Mg(2+)-binding residues include asparagine 489, threonine 493, and glutamate 497.

The protein belongs to the terpene synthase family. Tpsb subfamily. Mg(2+) is required as a cofactor. The cofactor is Mn(2+). Expressed exclusively in mature flowers, but not in inmmature buds.

It is found in the plastid. The protein localises to the chloroplast. The enzyme catalyses (2E)-geranyl diphosphate = beta-myrcene + diphosphate. It functions in the pathway secondary metabolite biosynthesis; terpenoid biosynthesis. Functionally, involved in monoterpene (C10) biosynthesis. The major products are alpha- and beta-pinene, sabinene, beta-myrcene, (E)-beta-ocimene and limonene. This chain is Beta-myrcene/(E)-beta-ocimene synthase 2, chloroplastic (TPS24), found in Arabidopsis thaliana (Mouse-ear cress).